The primary structure comprises 276 residues: HUWE1-associated protein modifying stress responses 2 (276 aa).

Disordered stretches follow at residues glycine 146–glycine 182, isoleucine 204–leucine 238, and valine 252–valine 276. Positions proline 149–proline 165 are enriched in pro residues. 2 stretches are compositionally biased toward low complexity: residues alanine 166–threonine 179 and serine 208–glycine 219. The tract at residues valine 252–valine 276 is nuclear localization signal.

This sequence belongs to the HAPSTR1 family. Homooligomer. Heterooligomer with HAPSTR1; the interaction is direct and stabilizes HAPSTR1 independently of HUWE1. Interacts with HUWE1.

It localises to the nucleus. Functionally, together with HAPSTR1 plays a central regulatory role in the cellular response to molecular stressors, such as DNA damage, nutrient scarcity, and protein misfolding. Regulates these multiple stress response signaling pathways by stabilizing HAPSTR1, but also independently of HAPSTR1. The polypeptide is HUWE1-associated protein modifying stress responses 2 (Mus musculus (Mouse)).